We begin with the raw amino-acid sequence, 161 residues long: Phosphopantetheine adenylyltransferase (161 aa).

Thr-10 provides a ligand contact to substrate. ATP-binding positions include Thr-10–Phe-11 and His-18. Positions 42, 74, and 88 each coordinate substrate. ATP contacts are provided by residues Gly-89–Arg-91, Glu-99, and Asn-124–Ser-130.

This sequence belongs to the bacterial CoaD family. As to quaternary structure, homohexamer. The cofactor is Mg(2+).

It localises to the cytoplasm. It catalyses the reaction (R)-4'-phosphopantetheine + ATP + H(+) = 3'-dephospho-CoA + diphosphate. It participates in cofactor biosynthesis; coenzyme A biosynthesis; CoA from (R)-pantothenate: step 4/5. Its function is as follows. Reversibly transfers an adenylyl group from ATP to 4'-phosphopantetheine, yielding dephospho-CoA (dPCoA) and pyrophosphate. The polypeptide is Phosphopantetheine adenylyltransferase (Wolinella succinogenes (strain ATCC 29543 / DSM 1740 / CCUG 13145 / JCM 31913 / LMG 7466 / NCTC 11488 / FDC 602W) (Vibrio succinogenes)).